The primary structure comprises 592 residues: UPF0329 protein ECU01_0110/ECU01_1500/ECU08_0040 (592 aa).

Basic and acidic residues-rich tracts occupy residues 306 to 339 (RQRR…SKEK) and 353 to 362 (EAKEEEKKES). The disordered stretch occupies residues 306–404 (RQRRREREIE…RKRYKIHRRV (99 aa)).

It belongs to the UPF0329 family.

The protein is UPF0329 protein ECU01_0110/ECU01_1500/ECU08_0040 of Encephalitozoon cuniculi (strain GB-M1) (Microsporidian parasite).